We begin with the raw amino-acid sequence, 301 residues long: Fluoroquinolones export ATP-binding protein Rv2688c (301 aa).

Residues 18-246 (IRVRGLTFRY…RSRRRVRVEY (229 aa)) enclose the ABC transporter domain. Residue 52-59 (GPSGAGKS) participates in ATP binding.

Belongs to the ABC transporter superfamily. As to quaternary structure, the complex is composed of 2 ATP-binding proteins (Rv2688c) and 2 transmembrane proteins (Rv2686c and Rv2687c).

Its subcellular location is the cell membrane. Inhibited by reserpine and verapamil. Part of the ABC transporter complex Rv2686c/Rv2687c/Rv2688c involved in fluoroquinolones export. Confers resistance to ciprofloxacin and, to a lesser extent, norfloxacin, moxifloxacin and sparfloxacin. Probably responsible for energy coupling to the transport system. This Mycobacterium tuberculosis (strain ATCC 25618 / H37Rv) protein is Fluoroquinolones export ATP-binding protein Rv2688c.